The chain runs to 296 residues: Ribose import binding protein RbsB (296 aa).

Positions 1-25 (MNMKKLATLVSAVALSATVSANAMA) are cleaved as a signal peptide.

The protein belongs to the bacterial solute-binding protein 2 family. As to quaternary structure, the complex is composed of an ATP-binding protein (RbsA), two transmembrane proteins (RbsC) and a solute-binding protein (RbsB).

The protein localises to the periplasm. Its function is as follows. Part of the ABC transporter complex RbsABC involved in ribose import. Binds ribose. Also serves as the primary chemoreceptor for chemotaxis. The sequence is that of Ribose import binding protein RbsB from Escherichia coli (strain K12).